We begin with the raw amino-acid sequence, 104 residues long: uncharacterized protein (104 aa).

This is an uncharacterized protein from Escherichia coli (Bacteriophage T4).